The following is a 152-amino-acid chain: MKVIFLQDVKGKGKKGEIKEVPLGYAQNFLIKKNLAKEATKQAIGELKGKQKSEEKHAAELLAEAKRVKEQLEKEENRLQFTEKVGPDGRTFGSITAKKIAEGLQKQFGIKIDKRHIELEHPIRAIGLIEVPVKLHKEVNAQIKLNIKNSAE.

Belongs to the bacterial ribosomal protein bL9 family.

In terms of biological role, binds to the 23S rRNA. The chain is Large ribosomal subunit protein bL9 from Streptococcus thermophilus (strain ATCC BAA-491 / LMD-9).